We begin with the raw amino-acid sequence, 109 residues long: Mitochondrial import receptor subunit TOM22 homolog (109 aa).

Over 1–60 (MALVRDDFDDIPDSEIHETIVERIEGLGEMFPDALRSAVHSTVDWSIWGVKGVFSLTKST) the chain is Cytoplasmic. Residues 61–77 (IWVVSTTSLIAFLPYII) form a helical membrane-spanning segment. Residues 78-109 (EKERSDLEKTQVAQQRQMLLGPSAAIQQAKTA) are Mitochondrial intermembrane-facing.

Belongs to the Tom22 family. Forms part of the preprotein translocase complex of the outer mitochondrial membrane (TOM complex).

It localises to the mitochondrion outer membrane. Its function is as follows. Central receptor component of the translocase of the outer membrane of mitochondria (TOM complex) responsible for the recognition and translocation of cytosolically synthesized mitochondrial preproteins. Together with the peripheral receptor tomm-20 functions as the transit peptide receptor and facilitates the movement of preproteins into the translocation pore. The sequence is that of Mitochondrial import receptor subunit TOM22 homolog from Caenorhabditis elegans.